We begin with the raw amino-acid sequence, 311 residues long: Formimidoylglutamase (311 aa).

Positions 122, 151, 153, 155, 242, and 244 each coordinate Mn(2+).

The protein belongs to the arginase family. Mn(2+) serves as cofactor.

It catalyses the reaction N-formimidoyl-L-glutamate + H2O = formamide + L-glutamate. It functions in the pathway amino-acid degradation; L-histidine degradation into L-glutamate; L-glutamate from N-formimidoyl-L-glutamate (hydrolase route): step 1/1. In terms of biological role, catalyzes the conversion of N-formimidoyl-L-glutamate to L-glutamate and formamide. The polypeptide is Formimidoylglutamase (Pseudomonas paraeruginosa (strain DSM 24068 / PA7) (Pseudomonas aeruginosa (strain PA7))).